The primary structure comprises 477 residues: ATP synthase subunit beta, chloroplastic (477 aa).

156-163 (GGAGVGKT) is an ATP binding site.

Belongs to the ATPase alpha/beta chains family. In terms of assembly, F-type ATPases have 2 components, CF(1) - the catalytic core - and CF(0) - the membrane proton channel. CF(1) has five subunits: alpha(3), beta(3), gamma(1), delta(1), epsilon(1). CF(0) has four main subunits: a(1), b(1), b'(1) and c(9-12).

The protein localises to the plastid. It localises to the chloroplast thylakoid membrane. The enzyme catalyses ATP + H2O + 4 H(+)(in) = ADP + phosphate + 5 H(+)(out). Functionally, produces ATP from ADP in the presence of a proton gradient across the membrane. The catalytic sites are hosted primarily by the beta subunits. This Bigelowiella natans (Pedinomonas minutissima) protein is ATP synthase subunit beta, chloroplastic.